Reading from the N-terminus, the 630-residue chain is Probable potassium transport system protein Kup 1 (630 aa).

12 consecutive transmembrane segments (helical) span residues 15–35 (FAALALAALGVVYGDIGTSPL), 59–79 (LSLIFWALVIVVSVKYVTFIM), 109–129 (WIMIVGVLGAAMFYGDGMVTP), 145–165 (PALKPFVIPLTMVVLFILFFV), 173–193 (VGAFFGPVMLVWFSALALLGV), 223–243 (LVAMGNVVLAVTGAEALYADM), 255–275 (WFAFVLPALVLNYFGQGALIL), 297–317 (LVGLATLATVIASQAVISGAF), 345–365 (IYLPAVNWGLMVAVMILVLGF), 374–394 (AYGIAVTGDMVITSILATVVV), 405–425 (AGLLFACFLSVELVFLAANIL), and 427–447 (IPDGGWFPLVAGMGVFVLMTT).

It belongs to the HAK/KUP transporter (TC 2.A.72) family.

It is found in the cell inner membrane. The enzyme catalyses K(+)(in) + H(+)(in) = K(+)(out) + H(+)(out). Functionally, transport of potassium into the cell. Likely operates as a K(+):H(+) symporter. This chain is Probable potassium transport system protein Kup 1, found in Dechloromonas aromatica (strain RCB).